The primary structure comprises 93 residues: uncharacterized protein (93 aa).

This is an uncharacterized protein from Bacillus subtilis (strain 168).